The primary structure comprises 343 residues: Uroporphyrinogen decarboxylase (343 aa).

Residues 23–27 (RQAGR), Phe-42, Asp-73, Tyr-150, Ser-205, and His-322 each bind substrate.

It belongs to the uroporphyrinogen decarboxylase family. As to quaternary structure, homodimer.

The protein resides in the cytoplasm. It catalyses the reaction uroporphyrinogen III + 4 H(+) = coproporphyrinogen III + 4 CO2. It functions in the pathway porphyrin-containing compound metabolism; protoporphyrin-IX biosynthesis; coproporphyrinogen-III from 5-aminolevulinate: step 4/4. Inhibited by N-ethyl-maleimide and phenylglyoxal. In terms of biological role, catalyzes the decarboxylation of four acetate groups of uroporphyrinogen-III to yield coproporphyrinogen-III. The chain is Uroporphyrinogen decarboxylase (hemE) from Cereibacter sphaeroides (strain ATCC 17023 / DSM 158 / JCM 6121 / CCUG 31486 / LMG 2827 / NBRC 12203 / NCIMB 8253 / ATH 2.4.1.) (Rhodobacter sphaeroides).